The following is an 81-amino-acid chain: Defensin-like protein 266 (81 aa).

Positions M1–A26 are cleaved as a signal peptide. Disulfide bonds link C40–C58, C46–C63, and C50–C65.

Belongs to the DEFL family.

It localises to the secreted. This is Defensin-like protein 266 from Arabidopsis thaliana (Mouse-ear cress).